Reading from the N-terminus, the 101-residue chain is Ubiquitin-related modifier 1 (101 aa).

G101 is modified (1-thioglycine). A Glycyl lysine isopeptide (Gly-Lys) (interchain with K-? in acceptor proteins) cross-link involves residue G101.

It belongs to the URM1 family. Post-translationally, C-terminal thiocarboxylation occurs in 2 steps, it is first acyl-adenylated (-COAMP) via the hesA/moeB/thiF part of UBA4, then thiocarboxylated (-COSH) via the rhodanese domain of UBA4.

The protein resides in the cytoplasm. It functions in the pathway tRNA modification; 5-methoxycarbonylmethyl-2-thiouridine-tRNA biosynthesis. In terms of biological role, acts as a sulfur carrier required for 2-thiolation of mcm(5)S(2)U at tRNA wobble positions of cytosolic tRNA(Lys), tRNA(Glu) and tRNA(Gln). Serves as sulfur donor in tRNA 2-thiolation reaction by being thiocarboxylated (-COSH) at its C-terminus by the MOCS3 homolog UBA4. The sulfur is then transferred to tRNA to form 2-thiolation of mcm(5)S(2)U. Prior mcm(5) tRNA modification by the elongator complex is required for 2-thiolation. Also acts as a ubiquitin-like protein (UBL) that is covalently conjugated via an isopeptide bond to lysine residues of target proteins such as AHP1. The thiocarboxylated form serves as substrate for conjugation and oxidative stress specifically induces the formation of UBL-protein conjugates. The polypeptide is Ubiquitin-related modifier 1 (Kluyveromyces lactis (strain ATCC 8585 / CBS 2359 / DSM 70799 / NBRC 1267 / NRRL Y-1140 / WM37) (Yeast)).